A 180-amino-acid polypeptide reads, in one-letter code: Large ribosomal subunit protein uL5 (180 aa).

It belongs to the universal ribosomal protein uL5 family. Part of the 50S ribosomal subunit; part of the 5S rRNA/L5/L18/L25 subcomplex. Contacts the 5S rRNA and the P site tRNA. Forms a bridge to the 30S subunit in the 70S ribosome.

This is one of the proteins that bind and probably mediate the attachment of the 5S RNA into the large ribosomal subunit, where it forms part of the central protuberance. In the 70S ribosome it contacts protein S13 of the 30S subunit (bridge B1b), connecting the 2 subunits; this bridge is implicated in subunit movement. Contacts the P site tRNA; the 5S rRNA and some of its associated proteins might help stabilize positioning of ribosome-bound tRNAs. This Leuconostoc mesenteroides subsp. mesenteroides (strain ATCC 8293 / DSM 20343 / BCRC 11652 / CCM 1803 / JCM 6124 / NCDO 523 / NBRC 100496 / NCIMB 8023 / NCTC 12954 / NRRL B-1118 / 37Y) protein is Large ribosomal subunit protein uL5.